The following is a 417-amino-acid chain: Serine hydroxymethyltransferase (417 aa).

(6S)-5,6,7,8-tetrahydrofolate contacts are provided by residues Leu-121 and 125–127 (GHL). Lys-229 carries the N6-(pyridoxal phosphate)lysine modification. (6S)-5,6,7,8-tetrahydrofolate is bound at residue 355–357 (SPF).

It belongs to the SHMT family. Homodimer. Requires pyridoxal 5'-phosphate as cofactor.

The protein resides in the cytoplasm. The catalysed reaction is (6R)-5,10-methylene-5,6,7,8-tetrahydrofolate + glycine + H2O = (6S)-5,6,7,8-tetrahydrofolate + L-serine. Its pathway is one-carbon metabolism; tetrahydrofolate interconversion. It functions in the pathway amino-acid biosynthesis; glycine biosynthesis; glycine from L-serine: step 1/1. Functionally, catalyzes the reversible interconversion of serine and glycine with tetrahydrofolate (THF) serving as the one-carbon carrier. This reaction serves as the major source of one-carbon groups required for the biosynthesis of purines, thymidylate, methionine, and other important biomolecules. Also exhibits THF-independent aldolase activity toward beta-hydroxyamino acids, producing glycine and aldehydes, via a retro-aldol mechanism. This chain is Serine hydroxymethyltransferase, found in Shewanella sp. (strain ANA-3).